The primary structure comprises 529 residues: Ribonuclease Y (529 aa).

The chain crosses the membrane as a helical span at residues 4-24; the sequence is GLIYISLEVLVACLITALIMY. The region spanning 216–297 is the KH domain; the sequence is LTTRIALPCS…NRIEEVYHRV (82 aa). The 94-residue stretch at 342-435 folds into the HD domain; it reads ALQHSKEVAL…VCAADALSAG (94 aa).

Belongs to the RNase Y family.

It localises to the cell membrane. Functionally, endoribonuclease that initiates mRNA decay. This chain is Ribonuclease Y, found in Helicobacter pylori (strain HPAG1).